The primary structure comprises 431 residues: Divergent protein kinase domain 1B (431 aa).

Over methionine 1–lysine 30 the chain is Cytoplasmic. The May mediate ER retention signature appears at arginine 5–arginine 6. Residues tyrosine 31–serine 51 form a helical membrane-spanning segment. The Lumenal portion of the chain corresponds to serine 52–serine 431. 2 disulfides stabilise this stretch: cysteine 57/cysteine 94 and cysteine 62/cysteine 117.

Belongs to the DIPK family. Among the many cysteines in the lumenal domain, most are probably involved in disulfide bonds. In terms of tissue distribution, expressed in kidney, testis, lung, heart, stomach, intestine, pancreas, liver and salivary gland. Strongly expressed in acute pancreatitis, brain, and in peripheral endothelial cells.

The protein resides in the endoplasmic reticulum membrane. The polypeptide is Divergent protein kinase domain 1B (Dipk1b) (Mus musculus (Mouse)).